The primary structure comprises 256 residues: Enolase-phosphatase E1 (256 aa).

The Mg(2+) site is built by Asp-14 and Glu-16. Residues 142–143 (SS) and Lys-176 each bind substrate. Asp-201 is a Mg(2+) binding site.

Belongs to the HAD-like hydrolase superfamily. MasA/MtnC family. Monomer. It depends on Mg(2+) as a cofactor.

Its subcellular location is the cytoplasm. The protein localises to the nucleus. The catalysed reaction is 5-methylsulfanyl-2,3-dioxopentyl phosphate + H2O = 1,2-dihydroxy-5-(methylsulfanyl)pent-1-en-3-one + phosphate. The protein operates within amino-acid biosynthesis; L-methionine biosynthesis via salvage pathway; L-methionine from S-methyl-5-thio-alpha-D-ribose 1-phosphate: step 3/6. It functions in the pathway amino-acid biosynthesis; L-methionine biosynthesis via salvage pathway; L-methionine from S-methyl-5-thio-alpha-D-ribose 1-phosphate: step 4/6. Its function is as follows. Bifunctional enzyme that catalyzes the enolization of 2,3-diketo-5-methylthiopentyl-1-phosphate (DK-MTP-1-P) into the intermediate 2-hydroxy-3-keto-5-methylthiopentenyl-1-phosphate (HK-MTPenyl-1-P), which is then dephosphorylated to form the acireductone 1,2-dihydroxy-3-keto-5-methylthiopentene (DHK-MTPene). This is Enolase-phosphatase E1 from Drosophila simulans (Fruit fly).